A 55-amino-acid polypeptide reads, in one-letter code: Large ribosomal subunit protein bL33B (55 aa).

This sequence belongs to the bacterial ribosomal protein bL33 family.

This chain is Large ribosomal subunit protein bL33B, found in Kineococcus radiotolerans (strain ATCC BAA-149 / DSM 14245 / SRS30216).